Reading from the N-terminus, the 434-residue chain is Serine hydroxymethyltransferase (434 aa).

(6S)-5,6,7,8-tetrahydrofolate is bound by residues L133 and 137 to 139 (GHL). An N6-(pyridoxal phosphate)lysine modification is found at K242.

This sequence belongs to the SHMT family. In terms of assembly, homodimer. It depends on pyridoxal 5'-phosphate as a cofactor.

The protein localises to the cytoplasm. It catalyses the reaction (6R)-5,10-methylene-5,6,7,8-tetrahydrofolate + glycine + H2O = (6S)-5,6,7,8-tetrahydrofolate + L-serine. It functions in the pathway one-carbon metabolism; tetrahydrofolate interconversion. The protein operates within amino-acid biosynthesis; glycine biosynthesis; glycine from L-serine: step 1/1. Functionally, catalyzes the reversible interconversion of serine and glycine with tetrahydrofolate (THF) serving as the one-carbon carrier. This reaction serves as the major source of one-carbon groups required for the biosynthesis of purines, thymidylate, methionine, and other important biomolecules. Also exhibits THF-independent aldolase activity toward beta-hydroxyamino acids, producing glycine and aldehydes, via a retro-aldol mechanism. The polypeptide is Serine hydroxymethyltransferase (Caulobacter sp. (strain K31)).